The following is a 342-amino-acid chain: Porphobilinogen deaminase (342 aa).

C249 carries the S-(dipyrrolylmethanemethyl)cysteine modification. The segment at 323-342 is disordered; sequence AAAKQGAAEDGAADSAATGE.

The protein belongs to the HMBS family. As to quaternary structure, monomer. Requires dipyrromethane as cofactor.

It carries out the reaction 4 porphobilinogen + H2O = hydroxymethylbilane + 4 NH4(+). It participates in porphyrin-containing compound metabolism; protoporphyrin-IX biosynthesis; coproporphyrinogen-III from 5-aminolevulinate: step 2/4. Tetrapolymerization of the monopyrrole PBG into the hydroxymethylbilane pre-uroporphyrinogen in several discrete steps. This is Porphobilinogen deaminase from Paraburkholderia phytofirmans (strain DSM 17436 / LMG 22146 / PsJN) (Burkholderia phytofirmans).